The primary structure comprises 96 residues: MEQAPEDQGPQREPYNEWALELLEELKQEAVRHFPRPWLHNLGQYIYETYGDTWSGVEALIRTLQQLMFIHFRIGCQHSRIGILRQRRARNGASRS.

Positions 1 to 42 (MEQAPEDQGPQREPYNEWALELLEELKQEAVRHFPRPWLHNL) are homooligomerization. Residues serine 79, serine 94, and serine 96 each carry the phosphoserine; by host modification.

It belongs to the HIV-1 VPR protein family. As to quaternary structure, homooligomer, may form homodimer. Interacts with p6-gag region of the Pr55 Gag precursor protein through a (Leu-X-X)4 motif near the C-terminus of the P6gag protein. Interacts with host UNG. May interact with host RAD23A/HHR23A. Interacts with host VPRBP/DCAF1, leading to hijack the CUL4A-RBX1-DDB1-DCAF1/VPRBP complex, mediating ubiquitination of host proteins such as TERT and ZGPAT and arrest of the cell cycle in G2 phase. Phosphorylated on several residues by host. These phosphorylations regulate VPR activity for the nuclear import of the HIV-1 pre-integration complex.

It is found in the virion. The protein resides in the host nucleus. The protein localises to the host extracellular space. In terms of biological role, during virus replication, may deplete host UNG protein, and incude G2-M cell cycle arrest. Acts by targeting specific host proteins for degradation by the 26S proteasome, through association with the cellular CUL4A-DDB1 E3 ligase complex by direct interaction with host VPRPB/DCAF-1. Cell cycle arrest reportedly occurs within hours of infection and is not blocked by antiviral agents, suggesting that it is initiated by the VPR carried into the virion. Additionally, VPR induces apoptosis in a cell cycle dependent manner suggesting that these two effects are mechanistically linked. Detected in the serum and cerebrospinal fluid of AIDS patient, VPR may also induce cell death to bystander cells. Functionally, during virus entry, plays a role in the transport of the viral pre-integration (PIC) complex to the host nucleus. This function is crucial for viral infection of non-dividing macrophages. May act directly at the nuclear pore complex, by binding nucleoporins phenylalanine-glycine (FG)-repeat regions. This is Protein Vpr from Homo sapiens (Human).